The chain runs to 816 residues: Metabotropic glutamate receptor-like protein E (816 aa).

Residues 1 to 27 (MKIKIGNILKNVVILVIFSLFISKINS) form the signal peptide. The Extracellular portion of the chain corresponds to 28–436 (EVVKPNPAKP…QVVVFDRTLN (409 aa)). N-linked (GlcNAc...) asparagine glycans are attached at residues Asn-68, Asn-311, and Asn-388. A helical membrane pass occupies residues 437–457 (IVLGVITGVCVLIVIGIGSVI). Residues 458-469 (ALQWRKFRYSSP) lie on the Cytoplasmic side of the membrane. The chain crosses the membrane as a helical span at residues 470-490 (LFCMFIIIGALMGLASVFTLL). Topologically, residues 491 to 496 (PTPTTP) are extracellular. A helical transmembrane segment spans residues 497–517 (LCSGFPWLLGLGYVIVFGTLF). The Cytoplasmic segment spans residues 518–541 (TKTWRTWRLFSNARKFKIIRITNK). A helical membrane pass occupies residues 542–562 (FIITLVGGFVLLESIFMIIWT). Topologically, residues 563-590 (AVDRPIPLAEPIFKAGEAQLQCTSDSEA) are extracellular. The helical transmembrane segment at 591–611 (WWYVFVFYKVFYILFGVFLAF) threads the bilayer. Over 612–625 (KTRNVVDSLNESKP) the chain is Cytoplasmic. Residues 626–646 (ITLALYNLTFVMVVAIALGFI) form a helical membrane-spanning segment. At 647–653 (LRDNPIA) the chain is on the extracellular side. A helical membrane pass occupies residues 654–674 (IIVIQTIAILLGFTVTVSVLF). The Cytoplasmic segment spans residues 675–816 (LPKVWMILSG…KKKKKKNNNK (142 aa)). Residues 697 to 718 (DSMGRSNGNTTEAESTRGYTNK) form a disordered region.

It belongs to the G-protein coupled receptor 3 family.

It is found in the membrane. Functionally, may be involved in early development in cAMP sensing and subsequent chemotactic response. Probable receptor of GABA and glutamate, leading respectively to the induction or inhibition of SDF-2 formation. The polypeptide is Metabotropic glutamate receptor-like protein E (grlE) (Dictyostelium discoideum (Social amoeba)).